We begin with the raw amino-acid sequence, 362 residues long: Chorismate synthase (362 aa).

R47 provides a ligand contact to NADP(+). FMN-binding positions include 124–126, G286, 301–305, and R327; these read RAS and KPTAT.

The protein belongs to the chorismate synthase family. As to quaternary structure, homotetramer. It depends on FMNH2 as a cofactor.

It catalyses the reaction 5-O-(1-carboxyvinyl)-3-phosphoshikimate = chorismate + phosphate. It participates in metabolic intermediate biosynthesis; chorismate biosynthesis; chorismate from D-erythrose 4-phosphate and phosphoenolpyruvate: step 7/7. Catalyzes the anti-1,4-elimination of the C-3 phosphate and the C-6 proR hydrogen from 5-enolpyruvylshikimate-3-phosphate (EPSP) to yield chorismate, which is the branch point compound that serves as the starting substrate for the three terminal pathways of aromatic amino acid biosynthesis. This reaction introduces a second double bond into the aromatic ring system. This Prochlorococcus marinus (strain MIT 9303) protein is Chorismate synthase.